Consider the following 572-residue polypeptide: Proline--tRNA ligase (572 aa).

Belongs to the class-II aminoacyl-tRNA synthetase family. ProS type 1 subfamily. Homodimer.

It is found in the cytoplasm. It catalyses the reaction tRNA(Pro) + L-proline + ATP = L-prolyl-tRNA(Pro) + AMP + diphosphate. Catalyzes the attachment of proline to tRNA(Pro) in a two-step reaction: proline is first activated by ATP to form Pro-AMP and then transferred to the acceptor end of tRNA(Pro). As ProRS can inadvertently accommodate and process non-cognate amino acids such as alanine and cysteine, to avoid such errors it has two additional distinct editing activities against alanine. One activity is designated as 'pretransfer' editing and involves the tRNA(Pro)-independent hydrolysis of activated Ala-AMP. The other activity is designated 'posttransfer' editing and involves deacylation of mischarged Ala-tRNA(Pro). The misacylated Cys-tRNA(Pro) is not edited by ProRS. The sequence is that of Proline--tRNA ligase from Escherichia coli O17:K52:H18 (strain UMN026 / ExPEC).